Consider the following 869-residue polypeptide: Translation initiation factor IF-2 (869 aa).

2 disordered regions span residues 51–78 (KQHGGTGSEAPKRMTLQRKTTSTLNMGK) and 105–277 (EEET…SDLK). Residues 67–76 (QRKTTSTLNM) are compositionally biased toward polar residues. Residues 110–119 (RALAEQQAQL) are compositionally biased toward low complexity. Over residues 120 to 241 (EAEKAAAEEA…KKQEAEEVHV (122 aa)) the composition is skewed to basic and acidic residues. The 174-residue stretch at 369 to 542 (SRAPVVTIMG…ELLDLKAPPT (174 aa)) folds into the tr-type G domain. Residues 378–385 (GHVDHGKT) are G1. Position 378-385 (378-385 (GHVDHGKT)) interacts with GTP. Residues 403–407 (GITQH) are G2. Residues 424-427 (DTPG) are G3. Residues 424-428 (DTPGH) and 478-481 (NKMD) each bind GTP. A G4 region spans residues 478–481 (NKMD). The G5 stretch occupies residues 514 to 516 (SAK).

It belongs to the TRAFAC class translation factor GTPase superfamily. Classic translation factor GTPase family. IF-2 subfamily.

The protein localises to the cytoplasm. Functionally, one of the essential components for the initiation of protein synthesis. Protects formylmethionyl-tRNA from spontaneous hydrolysis and promotes its binding to the 30S ribosomal subunits. Also involved in the hydrolysis of GTP during the formation of the 70S ribosomal complex. The chain is Translation initiation factor IF-2 from Pseudoalteromonas atlantica (strain T6c / ATCC BAA-1087).